Reading from the N-terminus, the 325-residue chain is NADH-quinone oxidoreductase subunit H (325 aa).

A run of 8 helical transmembrane segments spans residues 11 to 31, 81 to 101, 114 to 134, 154 to 174, 186 to 206, 237 to 257, 265 to 285, and 304 to 324; these read ILLT…CGAF, VIFT…FAIV, IGIL…LFAG, LSYE…AGSF, VWNV…GVAV, FFVG…TLFF, LPPF…FILI, and ICLP…LWQA.

It belongs to the complex I subunit 1 family. In terms of assembly, NDH-1 is composed of 13 different subunits. Subunits NuoA, H, J, K, L, M, N constitute the membrane sector of the complex.

It localises to the cell inner membrane. It carries out the reaction a quinone + NADH + 5 H(+)(in) = a quinol + NAD(+) + 4 H(+)(out). In terms of biological role, NDH-1 shuttles electrons from NADH, via FMN and iron-sulfur (Fe-S) centers, to quinones in the respiratory chain. The immediate electron acceptor for the enzyme in this species is believed to be ubiquinone. Couples the redox reaction to proton translocation (for every two electrons transferred, four hydrogen ions are translocated across the cytoplasmic membrane), and thus conserves the redox energy in a proton gradient. This subunit may bind ubiquinone. In Escherichia coli O45:K1 (strain S88 / ExPEC), this protein is NADH-quinone oxidoreductase subunit H.